Reading from the N-terminus, the 92-residue chain is Small ribosomal subunit protein uS19c (92 aa).

The protein belongs to the universal ribosomal protein uS19 family.

Its subcellular location is the plastid. The protein localises to the chloroplast. In terms of biological role, protein S19 forms a complex with S13 that binds strongly to the 16S ribosomal RNA. This chain is Small ribosomal subunit protein uS19c, found in Gracilaria tenuistipitata var. liui (Red alga).